Reading from the N-terminus, the 306-residue chain is Phosphoribosylaminoimidazole-succinocarboxamide synthase (306 aa).

At Ser-2 the chain carries N-acetylserine.

It belongs to the SAICAR synthetase family. In terms of assembly, monomer.

The catalysed reaction is 5-amino-1-(5-phospho-D-ribosyl)imidazole-4-carboxylate + L-aspartate + ATP = (2S)-2-[5-amino-1-(5-phospho-beta-D-ribosyl)imidazole-4-carboxamido]succinate + ADP + phosphate + 2 H(+). It participates in purine metabolism; IMP biosynthesis via de novo pathway; 5-amino-1-(5-phospho-D-ribosyl)imidazole-4-carboxamide from 5-amino-1-(5-phospho-D-ribosyl)imidazole-4-carboxylate: step 1/2. Catalyzes the reaction of 4-carboxy-5-aminoimidazole ribotide (CAIR) and aspartic acid with the formation of N-succinyl-5-amino-imidazole-4-carboxamide ribotide (SAICAR) in the purine biosynthesis pathway. The polypeptide is Phosphoribosylaminoimidazole-succinocarboxamide synthase (ADE1) (Saccharomyces cerevisiae (strain ATCC 204508 / S288c) (Baker's yeast)).